The following is a 116-amino-acid chain: Selenoprotein H (116 aa).

Lys20 is modified (N6-acetyllysine). Positions 35–38 (CTSU) form a cross-link, cysteinyl-selenocysteine (Cys-Sec); redox-active. Residue Sec38 is a non-standard amino acid, selenocysteine.

Belongs to the SelWTH family.

May be involved in a redox-related process. This is Selenoprotein H from Mus musculus (Mouse).